The primary structure comprises 945 residues: Isoleucine--tRNA ligase (945 aa).

A 'HIGH' region motif is present at residues 66–76 (PYANGDIHLGH). Glutamate 581 serves as a coordination point for L-isoleucyl-5'-AMP. Residues 622 to 626 (KMSKS) carry the 'KMSKS' region motif. Lysine 625 contacts ATP. The Zn(2+) site is built by cysteine 908, cysteine 911, cysteine 928, and cysteine 931.

Belongs to the class-I aminoacyl-tRNA synthetase family. IleS type 1 subfamily. Monomer. Requires Zn(2+) as cofactor.

The protein resides in the cytoplasm. It catalyses the reaction tRNA(Ile) + L-isoleucine + ATP = L-isoleucyl-tRNA(Ile) + AMP + diphosphate. Its function is as follows. Catalyzes the attachment of isoleucine to tRNA(Ile). As IleRS can inadvertently accommodate and process structurally similar amino acids such as valine, to avoid such errors it has two additional distinct tRNA(Ile)-dependent editing activities. One activity is designated as 'pretransfer' editing and involves the hydrolysis of activated Val-AMP. The other activity is designated 'posttransfer' editing and involves deacylation of mischarged Val-tRNA(Ile). The polypeptide is Isoleucine--tRNA ligase (Paraburkholderia phymatum (strain DSM 17167 / CIP 108236 / LMG 21445 / STM815) (Burkholderia phymatum)).